The sequence spans 157 residues: UPF0756 membrane protein BH3161 (157 aa).

The next 4 membrane-spanning stretches (helical) occupy residues 1 to 21, 54 to 74, 87 to 107, and 117 to 137; these read MISQ…LAKN, LGVT…EIGF, WVAL…IDLL, and LVLG…GPLI.

This sequence belongs to the UPF0756 family.

It is found in the cell membrane. This chain is UPF0756 membrane protein BH3161, found in Halalkalibacterium halodurans (strain ATCC BAA-125 / DSM 18197 / FERM 7344 / JCM 9153 / C-125) (Bacillus halodurans).